The primary structure comprises 228 residues: Peptide deformylase (228 aa).

Disordered regions lie at residues 1 to 28 (MSQD…EGAV) and 116 to 138 (GVPK…EPDR). Composition is skewed to polar residues over residues 8 to 18 (TGCNTHSNTHS) and 123 to 133 (NKQQANNSTSC). Fe cation contacts are provided by Cys-141 and His-183. The active site involves Glu-184. His-187 serves as a coordination point for Fe cation.

It belongs to the polypeptide deformylase family. It depends on Fe(2+) as a cofactor.

It carries out the reaction N-terminal N-formyl-L-methionyl-[peptide] + H2O = N-terminal L-methionyl-[peptide] + formate. Removes the formyl group from the N-terminal Met of newly synthesized proteins. Requires at least a dipeptide for an efficient rate of reaction. N-terminal L-methionine is a prerequisite for activity but the enzyme has broad specificity at other positions. This chain is Peptide deformylase, found in Tropheryma whipplei (strain Twist) (Whipple's bacillus).